Here is a 356-residue protein sequence, read N- to C-terminus: MRFQRRAMTLRQRLMLTIGLILLVFQLISTFWLWHESTEQIQLFEQALRDNRNNDRHIMHEIREAVASLIVPGVFMVSLTLLICYQAVRRITRPLAELQKELEARTADNLAPIAIHSSTLEIESVVSAINQLVTRLTTTLDNERLFTADVAHELRTPLSGVRLHLELLSKTHNVDVAPLIARLDQMMDSVSQLLQLARVGQSFSSGNYQEVKLLEDVILPSYDELNTMLETRQQTLLLPESAADVVVRGDATLLRMLLRNLVENAHRYSPEGTHITIHISADPDAIMAVEDEGPGIDESKCGKLSEAFVRMDSRYGGIGLGLSIVSRITQLHQGQFFLQNRTERTGTRAWVLLKKA.

Residues 1–13 lie on the Cytoplasmic side of the membrane; it reads MRFQRRAMTLRQR. The chain crosses the membrane as a helical span at residues 14 to 34; it reads LMLTIGLILLVFQLISTFWLW. At 35 to 64 the chain is on the periplasmic side; sequence HESTEQIQLFEQALRDNRNNDRHIMHEIRE. Residues 65–88 form a helical membrane-spanning segment; the sequence is AVASLIVPGVFMVSLTLLICYQAV. Positions 89 to 141 constitute an HAMP domain; sequence RRITRPLAELQKELEARTADNLAPIAIHSSTLEIESVVSAINQLVTRLTTTLD. Residues 89-356 are Cytoplasmic-facing; sequence RRITRPLAEL…TRAWVLLKKA (268 aa). The 208-residue stretch at 149–356 folds into the Histidine kinase domain; the sequence is DVAHELRTPL…TRAWVLLKKA (208 aa). His-152 carries the post-translational modification Phosphohistidine; by autocatalysis.

In terms of processing, autophosphorylated.

It localises to the cell inner membrane. The enzyme catalyses ATP + protein L-histidine = ADP + protein N-phospho-L-histidine.. Its function is as follows. Member of the two-component regulatory system BasS/BasR. Autophosphorylates and activates BasR by phosphorylation. Plays a role in the adaptation of the organism to the host environment, in particular to neutrophils, and therefore it plays a role in virulence as well. The chain is Sensor protein BasS (basS) from Salmonella typhimurium (strain LT2 / SGSC1412 / ATCC 700720).